A 227-amino-acid polypeptide reads, in one-letter code: PKHD-type hydroxylase Bcen_3557 (227 aa).

Residues 78–178 (KVFPPLFNRY…RVASFFWIQS (101 aa)) enclose the Fe2OG dioxygenase domain. Residues His-96, Asp-98, and His-159 each contribute to the Fe cation site. Arg-169 is a 2-oxoglutarate binding site.

Fe(2+) serves as cofactor. The cofactor is L-ascorbate.

In Burkholderia orbicola (strain AU 1054), this protein is PKHD-type hydroxylase Bcen_3557.